The primary structure comprises 782 residues: Protein bicaudal D (782 aa).

A coiled-coil region spans residues 15-77 (VQDLQMEVER…RHELDITQEA (63 aa)). Ser-103 is modified (phosphoserine). A coiled-coil region spans residues 107–249 (ETSLNLQIFD…LETLQGEREA (143 aa)). Phosphoserine occurs at positions 285, 288, and 305. Thr-306 carries the phosphothreonine modification. A Phosphoserine modification is found at Ser-310. Coiled coils occupy residues 320 to 368 (SEIH…FMSR) and 444 to 477 (TTTLRNEVTNLKNKLLATEQKSLDLQSDVQTLTH). Ser-528 is modified (phosphoserine). Coiled coils occupy residues 603–630 (EKVNTEEMEELQEQIVKLKSLLSVKREQ) and 695–743 (CEEY…MEMD). An interaction with Rab6 region spans residues 699–722 (VTQVDDLNRQLEAAEEEKKTLNQL). Residues 744 to 782 (REMRHVRRPMPAQRGTSGKSSFSTRPSSRNPASSNANPF) are disordered. Residues 757–767 (RGTSGKSSFST) show a composition bias toward polar residues. Over residues 768 to 782 (RPSSRNPASSNANPF) the composition is skewed to low complexity.

The protein belongs to the BicD family. May homodimerize but does not interact with BicDR. Interacts (via C-terminal domain) with Rab6. In terms of tissue distribution, in ovaries, expressed in oocyte and nurse cells.

The protein resides in the cytoplasm. It localises to the cytoskeleton. Functionally, this protein is essential for differentiation. It may play a role in localizing of Nanos (a maternal determinant) activity in oocytes. Functions redundantly with BicDR. During oogenesis, plays a specific role, together with Rab6 but independently of Sec5, in the polarization of the oocyte microtubule cytoskeleton, in oskar mRNA localization and in the anterodorsal secretion of grk. Plays a role in the biogenesis of annulate lamellae containing nuclear pore complex components. During macrochaetae development, together with BicDR, involved in Rab 6 and Spn-F stability and distribution and actin cytoskeleton organization. This chain is Protein bicaudal D, found in Drosophila melanogaster (Fruit fly).